The primary structure comprises 1231 residues: Cohesin subunit SA-2 (1231 aa).

Methionine 1 carries the N-acetylmethionine modification. The tract at residues 1–75 (MIAAPEIPTD…GSNRMNGHHQ (75 aa)) is disordered. The span at 36 to 48 (KQGKGKTCKKGKK) shows a compositional bias: basic residues. Residues 293-378 (FVHRYRDAIA…SRFKDRIVSM (86 aa)) form the SCD domain. Residue lysine 607 is modified to N6-acetyllysine. Residues serine 1058, serine 1061, serine 1064, and serine 1065 each carry the phosphoserine modification. The disordered stretch occupies residues 1062 to 1087 (GMSSRGSTVRSKKSKPSTGKRKVVEG). Residues 1071–1082 (RSKKSKPSTGKR) are compositionally biased toward basic residues. Phosphothreonine is present on threonine 1112. Serine 1177 and serine 1178 each carry phosphoserine.

It belongs to the SCC3 family. Interacts directly with RAD21 in cohesin complex. Cohesin complexes are composed of a heterodimer between a SMC1 protein (SMC1A or SMC1B) and SMC3, which are attached via their hinge domain, and RAD21 which link them at their heads, and one STAG protein (STAG1, STAG2 or STAG3). In cohesin complexes, STAG2 is mutually exclusive with STAG1 and STAG3. Post-translationally, phosphorylated by PLK1. The large dissociation of cohesin from chromosome arms during prophase is partly due to its phosphorylation.

Its subcellular location is the nucleus. It localises to the chromosome. The protein localises to the centromere. Its function is as follows. Component of cohesin complex, a complex required for the cohesion of sister chromatids after DNA replication. The cohesin complex apparently forms a large proteinaceous ring within which sister chromatids can be trapped. At anaphase, the complex is cleaved and dissociates from chromatin, allowing sister chromatids to segregate. The cohesin complex may also play a role in spindle pole assembly during mitosis. This Mus musculus (Mouse) protein is Cohesin subunit SA-2 (Stag2).